The following is a 365-amino-acid chain: Peptide chain release factor 2 (365 aa).

At Q252 the chain carries N5-methylglutamine.

Belongs to the prokaryotic/mitochondrial release factor family. Post-translationally, methylated by PrmC. Methylation increases the termination efficiency of RF2.

The protein localises to the cytoplasm. Functionally, peptide chain release factor 2 directs the termination of translation in response to the peptide chain termination codons UGA and UAA. The protein is Peptide chain release factor 2 of Klebsiella pneumoniae (strain 342).